The following is a 229-amino-acid chain: GTP cyclohydrolase 1 (229 aa).

The tract at residues 1 to 21 (MDAKIKPLRAGKSADARTDFQ) is disordered. The Zn(2+) site is built by Cys-118, His-121, and Cys-189.

Belongs to the GTP cyclohydrolase I family. In terms of assembly, toroid-shaped homodecamer, composed of two pentamers of five dimers.

The enzyme catalyses GTP + H2O = 7,8-dihydroneopterin 3'-triphosphate + formate + H(+). The protein operates within cofactor biosynthesis; 7,8-dihydroneopterin triphosphate biosynthesis; 7,8-dihydroneopterin triphosphate from GTP: step 1/1. The polypeptide is GTP cyclohydrolase 1 (Rhodopseudomonas palustris (strain HaA2)).